The chain runs to 468 residues: ATP synthase subunit beta (468 aa).

155-162 (GGAGVGKT) contributes to the ATP binding site.

It belongs to the ATPase alpha/beta chains family. In terms of assembly, F-type ATPases have 2 components, CF(1) - the catalytic core - and CF(0) - the membrane proton channel. CF(1) has five subunits: alpha(3), beta(3), gamma(1), delta(1), epsilon(1). CF(0) has three main subunits: a(1), b(2) and c(9-12). The alpha and beta chains form an alternating ring which encloses part of the gamma chain. CF(1) is attached to CF(0) by a central stalk formed by the gamma and epsilon chains, while a peripheral stalk is formed by the delta and b chains.

It localises to the cell membrane. It carries out the reaction ATP + H2O + 4 H(+)(in) = ADP + phosphate + 5 H(+)(out). Its function is as follows. Produces ATP from ADP in the presence of a proton gradient across the membrane. The catalytic sites are hosted primarily by the beta subunits. This Streptococcus uberis (strain ATCC BAA-854 / 0140J) protein is ATP synthase subunit beta.